The following is a 192-amino-acid chain: Large ribosomal subunit protein bL9 (192 aa).

The tract at residues 172 to 192 (DALRPEDFFDPEADGIDEDEA) is disordered. Over residues 179-192 (FFDPEADGIDEDEA) the composition is skewed to acidic residues.

The protein belongs to the bacterial ribosomal protein bL9 family.

Functionally, binds to the 23S rRNA. The sequence is that of Large ribosomal subunit protein bL9 from Rhizobium etli (strain CIAT 652).